Reading from the N-terminus, the 143-residue chain is Putative 2'-deoxynucleoside 5'-phosphate N-hydrolase 1 (143 aa).

Residues His37, Glu82, and 106-108 each bind substrate; that span reads SAM.

The protein belongs to the 2'-deoxynucleoside 5'-phosphate N-hydrolase 1 family. In terms of assembly, monomer and homodimer.

The enzyme catalyses a pyrimidine 2'-deoxyribonucleoside 5'-phosphate + H2O = a pyrimidine nucleobase + 2-deoxy-D-ribose 5-phosphate. It catalyses the reaction a purine 2'-deoxyribonucleoside 5'-phosphate + H2O = a purine nucleobase + 2-deoxy-D-ribose 5-phosphate. Functionally, catalyzes the cleavage of the N-glycosidic bond of deoxyribonucleoside 5'-monophosphates to yield deoxyribose 5-phosphate and a purine or pyrimidine base. The sequence is that of Putative 2'-deoxynucleoside 5'-phosphate N-hydrolase 1 from Thermofilum pendens (strain DSM 2475 / Hrk 5).